The following is a 461-amino-acid chain: Argininosuccinate lyase (461 aa).

Belongs to the lyase 1 family. Argininosuccinate lyase subfamily.

It is found in the cytoplasm. The enzyme catalyses 2-(N(omega)-L-arginino)succinate = fumarate + L-arginine. It participates in amino-acid biosynthesis; L-arginine biosynthesis; L-arginine from L-ornithine and carbamoyl phosphate: step 3/3. The sequence is that of Argininosuccinate lyase from Laribacter hongkongensis (strain HLHK9).